The primary structure comprises 138 residues: Large ribosomal subunit protein uL16 (138 aa).

Over residues 1–16 the composition is skewed to basic residues; it reads MLIPRKVAHRKQHHPG. Residues 1–24 are disordered; sequence MLIPRKVAHRKQHHPGRTGAAKGG.

Belongs to the universal ribosomal protein uL16 family. Part of the 50S ribosomal subunit.

Binds 23S rRNA and is also seen to make contacts with the A and possibly P site tRNAs. This is Large ribosomal subunit protein uL16 from Frankia alni (strain DSM 45986 / CECT 9034 / ACN14a).